Consider the following 371-residue polypeptide: Signal peptide peptidase-like 1 (371 aa).

Residues methionine 1–lysine 6 are Lumenal-facing. A helical membrane pass occupies residues leucine 7 to tyrosine 27. Topologically, residues alanine 28–glutamine 57 are cytoplasmic. Residues alanine 58–leucine 75 form a helical membrane-spanning segment. Over phenylalanine 76–serine 80 the chain is Lumenal. A helical membrane pass occupies residues histidine 81–valine 103. Topologically, residues asparagine 104–lysine 123 are cytoplasmic. The helical transmembrane segment at proline 124–serine 146 threads the bilayer. Over glycine 147–tryptophan 149 the chain is Lumenal. Residues leucine 150–valine 167 traverse the membrane as a helical segment. Residues arginine 168–asparagine 171 lie on the Cytoplasmic side of the membrane. Residues isoleucine 172–phenylalanine 192 form a helical membrane-spanning segment. Residue aspartate 186 is part of the active site. Residues serine 193–tyrosine 258 are Lumenal-facing. The chain crosses the membrane as a helical span at residues methionine 259–phenylalanine 279. Residue aspartate 265 is part of the active site. Topologically, residues aspartate 280 to tyrosine 301 are cytoplasmic. A helical transmembrane segment spans residues valine 302 to leucine 322. Residues serine 323–proline 326 are Lumenal-facing. The chain crosses the membrane as a helical span at residues glutamine 327–leucine 347. Positions proline 328–leucine 330 match the PAL motif. The Cytoplasmic segment spans residues arginine 348–valine 371.

Belongs to the peptidase A22B family.

The protein localises to the endosome membrane. Intramembrane-cleaving aspartic protease (I-CLiP) that cleaves type II membrane signal peptides in the hydrophobic plane of the membrane. In Oryza sativa subsp. japonica (Rice), this protein is Signal peptide peptidase-like 1 (SPPL1).